Consider the following 323-residue polypeptide: DNA repair and recombination protein RadA (323 aa).

Gly114–Thr121 is a binding site for ATP.

This sequence belongs to the eukaryotic RecA-like protein family.

Functionally, involved in DNA repair and in homologous recombination. Binds and assemble on single-stranded DNA to form a nucleoprotein filament. Hydrolyzes ATP in a ssDNA-dependent manner and promotes DNA strand exchange between homologous DNA molecules. The chain is DNA repair and recombination protein RadA from Picrophilus torridus (strain ATCC 700027 / DSM 9790 / JCM 10055 / NBRC 100828 / KAW 2/3).